Reading from the N-terminus, the 545-residue chain is CTP synthase (545 aa).

The segment at 1–266 (MTTRYIFVTG…DDLVVKRFGL (266 aa)) is amidoligase domain. Ser-14 is a binding site for CTP. Ser-14 lines the UTP pocket. ATP-binding positions include 15 to 20 (SLGKGI) and Asp-72. Mg(2+) is bound by residues Asp-72 and Glu-140. CTP is bound by residues 147 to 149 (DIE), 187 to 192 (KTKPTQ), and Lys-223. Residues 187–192 (KTKPTQ) and Lys-223 each bind UTP. ATP is bound at residue 239–241 (KDV). The Glutamine amidotransferase type-1 domain occupies 291–542 (VIGMVGKYIE…IAAASAHQKR (252 aa)). Residue Gly-352 coordinates L-glutamine. The Nucleophile; for glutamine hydrolysis role is filled by Cys-379. Residues 380-383 (LGMQ), Glu-403, and Arg-470 contribute to the L-glutamine site. Catalysis depends on residues His-515 and Glu-517.

The protein belongs to the CTP synthase family. As to quaternary structure, homotetramer.

The enzyme catalyses UTP + L-glutamine + ATP + H2O = CTP + L-glutamate + ADP + phosphate + 2 H(+). It catalyses the reaction L-glutamine + H2O = L-glutamate + NH4(+). The catalysed reaction is UTP + NH4(+) + ATP = CTP + ADP + phosphate + 2 H(+). It participates in pyrimidine metabolism; CTP biosynthesis via de novo pathway; CTP from UDP: step 2/2. Allosterically activated by GTP, when glutamine is the substrate; GTP has no effect on the reaction when ammonia is the substrate. The allosteric effector GTP functions by stabilizing the protein conformation that binds the tetrahedral intermediate(s) formed during glutamine hydrolysis. Inhibited by the product CTP, via allosteric rather than competitive inhibition. Catalyzes the ATP-dependent amination of UTP to CTP with either L-glutamine or ammonia as the source of nitrogen. Regulates intracellular CTP levels through interactions with the four ribonucleotide triphosphates. This is CTP synthase from Shewanella putrefaciens (strain CN-32 / ATCC BAA-453).